The chain runs to 148 residues: Lysozyme C (148 aa).

The N-terminal stretch at 1 to 18 is a signal peptide; sequence MKALIILGLVLLSVTVQG. The C-type lysozyme domain maps to 19-148; sequence KIFERCELAR…VSQYVEGCGV (130 aa). Cystine bridges form between C24–C146, C48–C134, C83–C99, and C95–C113. Residues E53 and D71 contribute to the active site.

This sequence belongs to the glycosyl hydrolase 22 family. Monomer.

It catalyses the reaction Hydrolysis of (1-&gt;4)-beta-linkages between N-acetylmuramic acid and N-acetyl-D-glucosamine residues in a peptidoglycan and between N-acetyl-D-glucosamine residues in chitodextrins.. Its function is as follows. Lysozymes have primarily a bacteriolytic function; those in tissues and body fluids are associated with the monocyte-macrophage system and enhance the activity of immunoagents. The sequence is that of Lysozyme C (LYZ) from Colobus angolensis (Angolan colobus).